Here is a 416-residue protein sequence, read N- to C-terminus: Tyrosine--tRNA ligase (416 aa).

Y40 lines the L-tyrosine pocket. The 'HIGH' region motif lies at 45–54 (ATAKSLHVGS). Y177 and Q181 together coordinate L-tyrosine. Residues 237 to 241 (KMGKS) carry the 'KMSKS' region motif. An ATP-binding site is contributed by K240. One can recognise an S4 RNA-binding domain in the interval 351–415 (ISIVQLIVKS…GKKRHAMVQL (65 aa)).

Belongs to the class-I aminoacyl-tRNA synthetase family. TyrS type 1 subfamily. As to quaternary structure, homodimer.

The protein resides in the cytoplasm. It catalyses the reaction tRNA(Tyr) + L-tyrosine + ATP = L-tyrosyl-tRNA(Tyr) + AMP + diphosphate + H(+). In terms of biological role, catalyzes the attachment of tyrosine to tRNA(Tyr) in a two-step reaction: tyrosine is first activated by ATP to form Tyr-AMP and then transferred to the acceptor end of tRNA(Tyr). The chain is Tyrosine--tRNA ligase from Roseobacter denitrificans (strain ATCC 33942 / OCh 114) (Erythrobacter sp. (strain OCh 114)).